We begin with the raw amino-acid sequence, 182 residues long: Nucleoside-triphosphatase THEP1 (182 aa).

ATP contacts are provided by residues glycine 10–threonine 17 and valine 102–glycine 109.

The protein belongs to the THEP1 NTPase family.

It carries out the reaction a ribonucleoside 5'-triphosphate + H2O = a ribonucleoside 5'-diphosphate + phosphate + H(+). Has nucleotide phosphatase activity towards ATP, GTP, CTP, TTP and UTP. May hydrolyze nucleoside diphosphates with lower efficiency. The chain is Nucleoside-triphosphatase THEP1 from Thermofilum pendens (strain DSM 2475 / Hrk 5).